We begin with the raw amino-acid sequence, 576 residues long: Sodium/proton antiporter 1 (576 aa).

The transit peptide at 1 to 60 directs the protein to the chloroplast; sequence MAVFPIGSHFAPPHQLTKRHVIATSSPISISTRLPQNVSFSKVSGVTGSTRLSKHGVLVR. 9 helical membrane passes run 237–257, 279–299, 320–340, 357–377, 379–399, 426–446, 462–482, 501–521, and 541–561; these read TLLW…DNLT, LGGV…IGDV, FLPS…TSEV, APRG…VPVF, ALTG…LWIL, GALF…AGIL, LIAS…LVAA, LIAF…AAGV, and FAFA…NLHF.

This sequence belongs to the NhaD Na(+)/H(+) (TC 2.A.62) antiporter family. Mostly expressed in mature and senescent leaves, and, to a lower extent, in seeds, roots, shoots, flowers and developing siliques.

It localises to the plastid. Its subcellular location is the chloroplast membrane. It is found in the chloroplast envelope. Functionally, na(+)/H(+) antiporter that extrudes sodium in exchange for external protons. This chain is Sodium/proton antiporter 1, found in Arabidopsis thaliana (Mouse-ear cress).